The primary structure comprises 249 residues: ATP synthase subunits region ORF 6 (249 aa).

The protein is ATP synthase subunits region ORF 6 of Fuscovulum blasticum (Rhodobacter blasticus).